The primary structure comprises 311 residues: Solute carrier family 25 member 36 (311 aa).

Solcar repeat units follow at residues 4 to 108 (RDTL…CKEK), 116 to 203 (DSTQ…IKQK), and 224 to 308 (SDFV…VVYL). 6 helical membrane passes run 7-27 (LVHL…TCPL), 41-57 (LYIS…ASVN), 111-131 (GVFD…AGFT), 180-200 (MSAS…YESI), 226-246 (FVRM…IAYP), and 291-311 (QIPN…LLNG).

It belongs to the mitochondrial carrier (TC 2.A.29) family.

The protein resides in the mitochondrion inner membrane. The catalysed reaction is UTP(in) + CTP(out) = UTP(out) + CTP(in). It carries out the reaction CTP(out) + UDP(in) = CTP(in) + UDP(out). The enzyme catalyses UMP(in) + CTP(out) = UMP(out) + CTP(in). It catalyses the reaction dUTP(in) + CTP(out) = dUTP(out) + CTP(in). The catalysed reaction is dUMP(in) + CTP(out) = dUMP(out) + CTP(in). It carries out the reaction CDP(in) + CTP(out) = CDP(out) + CTP(in). The enzyme catalyses CTP(out) + CMP(in) = CTP(in) + CMP(out). It catalyses the reaction dCTP(in) + CTP(out) = dCTP(out) + CTP(in). The catalysed reaction is dCDP(in) + CTP(out) = dCDP(out) + CTP(in). It carries out the reaction dCMP(in) + CTP(out) = dCMP(out) + CTP(in). The enzyme catalyses GTP(in) + CTP(out) = GTP(out) + CTP(in). It catalyses the reaction CTP(out) + GDP(in) = CTP(in) + GDP(out). The catalysed reaction is GMP(in) + CTP(out) = GMP(out) + CTP(in). It carries out the reaction dGTP(in) + CTP(out) = dGTP(out) + CTP(in). The enzyme catalyses dGMP(in) + CTP(out) = dGMP(out) + CTP(in). It catalyses the reaction ITP(in) + CTP(out) = ITP(out) + CTP(in). The catalysed reaction is IDP(in) + CTP(out) = IDP(out) + CTP(in). It carries out the reaction IMP(in) + CTP(out) = IMP(out) + CTP(in). The enzyme catalyses CTP(out) = CTP(in). Its function is as follows. Mitochondrial transporter that imports/exports pyrimidine nucleotides into and from mitochondria. Selectively transports cytosine, guanosine, inosine and uridine (deoxy)nucleoside mono-, di-, and triphosphates by antiport mechanism. Catalyzes uniport at much lower rate. May import (deoxy)nucleoside triphosphates in exchange for intramitochondrial (deoxy)nucleoside mono- and diphosphates, thus providing precursors necessary for de novo synthesis of mitochondrial DNA and RNA while exporting products of their catabolism. Participates in mitochondrial genome maintenance, regulation of mitochondrial membrane potential and mitochondrial respiration. This Mus musculus (Mouse) protein is Solute carrier family 25 member 36 (Slc25a36).